The chain runs to 30 residues: APQDLSGKMFIFPQETSTANVXLTARSQDF.

A Pentraxin (PTX) domain is found at 1–30; it reads APQDLSGKMFIFPQETSTANVXLTARSQDF.

Belongs to the pentraxin family. Homopentamer. Discoid arrangement of 5 covalently bound subunits. Requires Ca(2+) as cofactor.

It is found in the secreted. In Anarhichas lupus (Atlantic wolffish), this protein is Serum amyloid P-component.